The primary structure comprises 279 residues: Thymidylate synthase (279 aa).

Residue 133 to 134 (RR) participates in dUMP binding. The active-site Nucleophile is Cys-154. Residues 178–181 (RSND), Asn-189, and 219–221 (HIY) contribute to the dUMP site. Asp-181 provides a ligand contact to (6R)-5,10-methylene-5,6,7,8-tetrahydrofolate. Residue Ala-278 coordinates (6R)-5,10-methylene-5,6,7,8-tetrahydrofolate.

Belongs to the thymidylate synthase family. Bacterial-type ThyA subfamily. In terms of assembly, homodimer.

The protein resides in the cytoplasm. The catalysed reaction is dUMP + (6R)-5,10-methylene-5,6,7,8-tetrahydrofolate = 7,8-dihydrofolate + dTMP. The protein operates within pyrimidine metabolism; dTTP biosynthesis. Its function is as follows. Catalyzes the reductive methylation of 2'-deoxyuridine-5'-monophosphate (dUMP) to 2'-deoxythymidine-5'-monophosphate (dTMP) while utilizing 5,10-methylenetetrahydrofolate (mTHF) as the methyl donor and reductant in the reaction, yielding dihydrofolate (DHF) as a by-product. This enzymatic reaction provides an intracellular de novo source of dTMP, an essential precursor for DNA biosynthesis. This is Thymidylate synthase from Streptococcus pyogenes serotype M12 (strain MGAS2096).